A 339-amino-acid polypeptide reads, in one-letter code: Protein RecA (339 aa).

73–80 (GPESSGKT) lines the ATP pocket.

This sequence belongs to the RecA family.

The protein resides in the cytoplasm. Its function is as follows. Can catalyze the hydrolysis of ATP in the presence of single-stranded DNA, the ATP-dependent uptake of single-stranded DNA by duplex DNA, and the ATP-dependent hybridization of homologous single-stranded DNAs. It interacts with LexA causing its activation and leading to its autocatalytic cleavage. The sequence is that of Protein RecA from Mycoplasmopsis pulmonis (strain UAB CTIP) (Mycoplasma pulmonis).